The following is a 410-amino-acid chain: Digeranylgeranylglycerophospholipid reductase (410 aa).

FAD contacts are provided by Ala15, Glu34, Val118, Asp286, Gly298, and Ile299. A 2,3-bis-O-(geranylgeranyl)-sn-glycerol 1-phospholipid-binding residues include Lys343 and Ala379.

The protein belongs to the geranylgeranyl reductase family. DGGGPL reductase subfamily. The cofactor is FAD.

It carries out the reaction a 2,3-bis-O-phytanyl-sn-glycerol 1-phospholipid + 8 A = a 2,3-bis-O-(geranylgeranyl)-sn-glycerol 1-phospholipid + 8 AH2. The catalysed reaction is 2,3-bis-O-(phytanyl)-sn-glycerol 1-phosphate + 8 A = 2,3-bis-O-(geranylgeranyl)-sn-glycerol 1-phosphate + 8 AH2. It catalyses the reaction CDP-2,3-bis-O-(geranylgeranyl)-sn-glycerol + 8 AH2 = CDP-2,3-bis-O-(phytanyl)-sn-glycerol + 8 A. The enzyme catalyses archaetidylserine + 8 AH2 = 2,3-bis-O-phytanyl-sn-glycero-3-phospho-L-serine + 8 A. It participates in membrane lipid metabolism; glycerophospholipid metabolism. In terms of biological role, is involved in the reduction of 2,3-digeranylgeranylglycerophospholipids (unsaturated archaeols) into 2,3-diphytanylglycerophospholipids (saturated archaeols) in the biosynthesis of archaeal membrane lipids. Can fully reduce the unsaturated isoprenoid side chains of membrane phospholipids and glycolipids. Is also able to reduce the omega-position isoprene of dolichol phosphate. The chain is Digeranylgeranylglycerophospholipid reductase from Haloferax volcanii (strain ATCC 29605 / DSM 3757 / JCM 8879 / NBRC 14742 / NCIMB 2012 / VKM B-1768 / DS2) (Halobacterium volcanii).